A 179-amino-acid chain; its full sequence is Large ribosomal subunit protein uL5 (179 aa).

This sequence belongs to the universal ribosomal protein uL5 family. In terms of assembly, part of the 50S ribosomal subunit; part of the 5S rRNA/L5/L18/L25 subcomplex. Contacts the 5S rRNA and the P site tRNA. Forms a bridge to the 30S subunit in the 70S ribosome.

This is one of the proteins that bind and probably mediate the attachment of the 5S RNA into the large ribosomal subunit, where it forms part of the central protuberance. In the 70S ribosome it contacts protein S13 of the 30S subunit (bridge B1b), connecting the 2 subunits; this bridge is implicated in subunit movement. Contacts the P site tRNA; the 5S rRNA and some of its associated proteins might help stabilize positioning of ribosome-bound tRNAs. The sequence is that of Large ribosomal subunit protein uL5 from Synechococcus sp. (strain CC9311).